A 240-amino-acid polypeptide reads, in one-letter code: Phosphoribosylaminoimidazole-succinocarboxamide synthase (240 aa).

This sequence belongs to the SAICAR synthetase family.

The catalysed reaction is 5-amino-1-(5-phospho-D-ribosyl)imidazole-4-carboxylate + L-aspartate + ATP = (2S)-2-[5-amino-1-(5-phospho-beta-D-ribosyl)imidazole-4-carboxamido]succinate + ADP + phosphate + 2 H(+). It functions in the pathway purine metabolism; IMP biosynthesis via de novo pathway; 5-amino-1-(5-phospho-D-ribosyl)imidazole-4-carboxamide from 5-amino-1-(5-phospho-D-ribosyl)imidazole-4-carboxylate: step 1/2. In Coxiella burnetii (strain RSA 493 / Nine Mile phase I), this protein is Phosphoribosylaminoimidazole-succinocarboxamide synthase.